A 538-amino-acid chain; its full sequence is Aldehyde dehydrogenase family 2 member B4, mitochondrial (538 aa).

Residues 1 to 38 constitute a mitochondrion transit peptide; the sequence is MAARRVSSLLSRSFSASSPLLFRSQGRNCYNGGILRRF. 282 to 287 contributes to the NAD(+) binding site; sequence GSTDTG. Catalysis depends on E305, which acts as the Proton acceptor. Catalysis depends on C339, which acts as the Nucleophile.

Belongs to the aldehyde dehydrogenase family. Homotetramer.

It localises to the mitochondrion matrix. It catalyses the reaction an aldehyde + NAD(+) + H2O = a carboxylate + NADH + 2 H(+). Functionally, possesses activity on acetaldehyde and glycolaldehyde in vitro. This is Aldehyde dehydrogenase family 2 member B4, mitochondrial (ALDH2B4) from Arabidopsis thaliana (Mouse-ear cress).